Reading from the N-terminus, the 444-residue chain is Probable ribonuclease FAU-1 (444 aa).

It belongs to the FAU-1 family.

Functionally, probable RNase involved in rRNA stability through maturation and/or degradation of precursor rRNAs. Binds to RNA in loop regions with AU-rich sequences. This Pyrobaculum arsenaticum (strain DSM 13514 / JCM 11321 / PZ6) protein is Probable ribonuclease FAU-1.